Consider the following 160-residue polypeptide: SUMO-conjugating enzyme SCE1 (160 aa).

A2 carries the N-acetylalanine modification. The region spanning I5–A158 is the UBC core domain. C94 (glycyl thioester intermediate) is an active-site residue.

This sequence belongs to the ubiquitin-conjugating enzyme family. In terms of assembly, interacts with SIZ1 (via PHD domain) and MMS21. Interacts with TCP14 and TCP15. Interacts with KIN10.

It functions in the pathway protein modification; protein sumoylation. Functionally, SUMO-conjugating enzyme that accepts the SUMO proteins from the E1 SUMO-activating heterodimer SAE1/SAE2 and catalyzes its covalent attachment to other proteins with the E3 SUMO ligases SIZ1 and MMS21. Associates with SIZ1 for sumoylation of the transcription factor GTE3. This chain is SUMO-conjugating enzyme SCE1 (SCE1), found in Arabidopsis thaliana (Mouse-ear cress).